We begin with the raw amino-acid sequence, 847 residues long: MIAYCGTTKMSDDIDWLHSRRGVCKVDLYSPEGQQDQDRKVICFVDVSTLNVEDDSKGAAGPRSDGELNLENLEEKEIIVIKDTEKQDQPKTEGSVCLFKQAPSDPISVLNWLLNDLQKYALGFQHALSPSASSCKHKVGDLEGDYHKIPSENCYSVYADQVNLDYLNKGPQNLRLEMAASKNTNNNQSPSNPATKSPSNQRSVATPDGECSMDDLSYYVNRLSSLVIQMARKEIKDKLEGGNKCLHHSMYTSGEKGKTSPRSAVSKIASEMAHEAVELTSSEMRGNGEEGRDGRKTFLYSELSNKNKCGEKQQMCPKDSKEFADSISKGLMVYANQVASDMMVSVMKTLKVHSCGKPIPACVVLKRVLLKHTKEIVSDLIDSCMKNLHNITGVLMTDSDFVSAVKRNLFNHGKQNAADIMEAMLKRLVSALLGEKKETKSQSLAYATLKAGTHDPKCKNQSLEFSAMKAEMKGKDKGKTKGDPCCKSLTSAERVSEHILKESLTMWNNQKQGTQGRVPNKVCPSKDEKREKISPSTDSLAKDLIVSALMLIQYHLTQQAKGKDPCEEECPGSSMGYMSQSAQYEKSGGGQSSKSLSMKHFESRGAPGPSTCAKENQLESQKMDMSNMVLSLIQKLLSESPFSCDELSESENKRCCDSRSKQAAPVAKRPEDQSQDSTEMDFISGMKQMNRQFIDQLVESVMKLCLIMAKYSNNGAALAELEEQAALASNGPRCGREAVMSQSYLETPGPEVIVNNQCSTSNLQKQLQAVLQWIAASQFNVPMLYFMGDDDGQLEKLPEVSAKAAEKGYSVGDLLQEVMKFAKERQLDEAVGNMARKQLLDWLLANL.

A propeptide spanning residues 1-187 is cleaved from the precursor; sequence MIAYCGTTKM…MAASKNTNNN (187 aa). Residues Ser95, Ser129, Ser189, and Ser203 each carry the phosphoserine modification. Over residues 182-204 the composition is skewed to polar residues; sequence KNTNNNQSPSNPATKSPSNQRSV. Positions 182–209 are disordered; it reads KNTNNNQSPSNPATKSPSNQRSVATPDG. Phosphothreonine is present on Thr206. Ser212, Ser225, and Ser270 each carry phosphoserine. Residues 218-231 form an interaction with Prkar1a and Prkar2a region; that stretch reads YYVNRLSSLVIQMA. Position 300 is a phosphotyrosine (Tyr300). A phosphoserine mark is found at Ser301, Ser304, Ser340, Ser430, Ser441, Ser443, Ser462, Ser491, Ser496, and Ser503. Residues 334–343 are PKA-RI subunit binding domain; that stretch reads YANQVASDMM. Thr505 is subject to Phosphothreonine. Positions 511 to 536 are disordered; that stretch reads KQGTQGRVPNKVCPSKDEKREKISPS. Basic and acidic residues predominate over residues 524-533; sequence PSKDEKREKI. Phosphoserine occurs at positions 536 and 581. The interval 583–613 is disordered; it reads QYEKSGGGQSSKSLSMKHFESRGAPGPSTCA. Residues Ser626, Ser631, Ser648, Ser650, Ser674, Ser677, Ser700, and Ser729 each carry the phosphoserine modification. Positions 655 to 677 are disordered; sequence CCDSRSKQAAPVAKRPEDQSQDS.

It belongs to the AKAP110 family. In terms of assembly, interacts with PRKAR1A and PRKAR2A. Interacts with ENO4. Interacts with QRICH2. Phosphorylated by STK33 during sperm flagella assembly. As to expression, expressed in flagella of epididymal sperm.

The protein localises to the cell projection. Its subcellular location is the cilium. It localises to the flagellum. Its function is as follows. Major structural component of sperm fibrous sheath. May play a role in sperm motility. This chain is A-kinase anchor protein 4, found in Rattus norvegicus (Rat).